The following is a 263-amino-acid chain: tRNA uridine(34) hydroxylase (263 aa).

Residues 129 to 223 enclose the Rhodanese domain; sequence EGREVVTLDT…YFEETDGAFY (95 aa). Cys-183 (cysteine persulfide intermediate) is an active-site residue.

This sequence belongs to the TrhO family.

It carries out the reaction uridine(34) in tRNA + AH2 + O2 = 5-hydroxyuridine(34) in tRNA + A + H2O. In terms of biological role, catalyzes oxygen-dependent 5-hydroxyuridine (ho5U) modification at position 34 in tRNAs. This Delftia acidovorans (strain DSM 14801 / SPH-1) protein is tRNA uridine(34) hydroxylase.